Consider the following 208-residue polypeptide: Ribosomal RNA small subunit methyltransferase G (208 aa).

Residues Gly74, Leu79, 125–126, and Arg140 each bind S-adenosyl-L-methionine; that span reads VE.

This sequence belongs to the methyltransferase superfamily. RNA methyltransferase RsmG family.

The protein resides in the cytoplasm. The enzyme catalyses guanosine(527) in 16S rRNA + S-adenosyl-L-methionine = N(7)-methylguanosine(527) in 16S rRNA + S-adenosyl-L-homocysteine. Its function is as follows. Specifically methylates the N7 position of guanine in position 527 of 16S rRNA. The chain is Ribosomal RNA small subunit methyltransferase G from Shewanella denitrificans (strain OS217 / ATCC BAA-1090 / DSM 15013).